The chain runs to 288 residues: Transformer-2 protein homolog beta (288 aa).

Disordered stretches follow at residues 1 to 114 (MSDS…RANP) and 196 to 225 (TKRP…YDRG). Residue S2 is modified to N-acetylserine. 3 positions are modified to phosphoserine: S2, S4, and S14. Residues 17-28 (ASRSGSAHGSGK) show a composition bias toward low complexity. The residue at position 29 (S29) is a Phosphoserine. Residue T33 is modified to Phosphothreonine. Basic residues predominate over residues 59-109 (RSRRSSRRHYTRSRSRSRSHRRSRSRSYSRDYRRRHSHSHSPMSTRRRHVG). Residues S83, S85, S87, S95, S97, and S99 each carry the phosphoserine modification. A Phosphothreonine modification is found at T103. Positions 118–196 (CCLGVFGLSL…RRIRVDFSIT (79 aa)) constitute an RRM domain. The linker stretch occupies residues 193 to 230 (FSITKRPHTPTPGIYMGRPTYGSSRRRDYYDRGYDRGY). K197 participates in a covalent cross-link: Glycyl lysine isopeptide (Lys-Gly) (interchain with G-Cter in SUMO2). Residues T201 and T203 each carry the phosphothreonine modification. Phosphoserine is present on residues S215 and S237. R241 carries the post-translational modification Asymmetric dimethylarginine; alternate. The residue at position 241 (R241) is a Dimethylated arginine; alternate. R241 bears the Omega-N-methylarginine; alternate mark. A disordered region spans residues 242 to 288 (GGGGGGGGWRAAQDRDQIYRRRSPSPYYSRGGYRSRSRSRSYSPRRY). Residues 274-288 (YRSRSRSRSYSPRRY) are compositionally biased toward basic residues.

Belongs to the splicing factor SR family. In terms of assembly, found in a pre-mRNA exonic splicing enhancer (ESE) complex with TRA2B/SFRS10, SNRNP70, SNRPA1 and SRRM1. Binds to A3 enhancer proteins SFRS4, SFRS5, SFRS6 and SFRS9. Interacts with CPSF6, RBMY1A1, RBMX, RNPS1 and phosphorylated SFRS13A. Interacts with SAFB/SAFB1. Interacts with ILDR1 (via C-terminus) and ILDR2. Phosphorylated in the RS domains.

The protein localises to the nucleus. Functionally, sequence-specific RNA-binding protein which participates in the control of pre-mRNA splicing. Can either activate or suppress exon inclusion. Acts additively with RBMX to promote exon 7 inclusion of the survival motor neuron SMN2. Activates the splicing of MAPT/Tau exon 10. Alters pre-mRNA splicing patterns by antagonizing the effects of splicing regulators, like RBMX. Binds to the AG-rich SE2 domain in the SMN exon 7 RNA. Binds to pre-mRNA. This is Transformer-2 protein homolog beta (TRA2B) from Bos taurus (Bovine).